We begin with the raw amino-acid sequence, 264 residues long: Late embryogenesis abundant protein D-34 (264 aa).

Positions 1–16 (MSQGQPRRPQQPAGQG) are enriched in low complexity. The segment at 1-23 (MSQGQPRRPQQPAGQGENQEPIK) is disordered. SMP domains are found at residues 22–76 (IKYG…RNEQ), 138–194 (ITIG…AHNA), and 203–261 (IKLN…LNEN).

It belongs to the LEA type SMP family.

In terms of biological role, LEA proteins are late embryonic proteins abundant in higher plant seed embryos. There are two subsets of LEA proteins (5a and 5b), the first ones are expressed when the cotyledon weight reach 80 mg and the second set are expressed above 100 mg. The function of those proteins is not known. The protein is Late embryogenesis abundant protein D-34 of Gossypium hirsutum (Upland cotton).